The following is a 261-amino-acid chain: Urease accessory protein UreD (261 aa).

The protein belongs to the UreD family. In terms of assembly, ureD, UreF and UreG form a complex that acts as a GTP-hydrolysis-dependent molecular chaperone, activating the urease apoprotein by helping to assemble the nickel containing metallocenter of UreC. The UreE protein probably delivers the nickel.

The protein resides in the cytoplasm. Its function is as follows. Required for maturation of urease via the functional incorporation of the urease nickel metallocenter. The protein is Urease accessory protein UreD of Haemophilus influenzae (strain ATCC 51907 / DSM 11121 / KW20 / Rd).